A 428-amino-acid chain; its full sequence is Cytokine-dependent hematopoietic cell linker (428 aa).

The segment at 1-22 is disordered; the sequence is MNRQGNRKTTKEGSNDLKFQNF. A phosphotyrosine; by LYN mark is found at Y69 and Y96. Disordered regions lie at residues 135–198 and 244–271; these read DKPI…EVQR and SSSFTTSNHSVQNRDHRGGMQPCSPQRC. Positions 159-164 are mediates interaction with PLCG1; essential for BCR signaling; involved in restoration of BCR-induced calcium response and ERK2 and JNK2 activation in BLNK-deficient cells expressing LAT; the sequence is PLPPPR. Positions 178-180 are mediates interaction with LAT, GRB2, and FGR; involved in translocation to the glycolipid-enriched microdomain and restoration of BCR-induced calcium response in BLNK-deficient DT40 cells expressing LAT; sequence PEP. Low complexity predominate over residues 244 to 253; that stretch reads SSSFTTSNHS. Positions 309–419 constitute an SH2 domain; sequence WYIGEYSRQA…RKQCHLTQPL (111 aa).

When phosphorylated, interacts with PLCG1, PLCG2, GRB2, VAV and LAT. Interacts with LBR and AGO2. Interacts with FGR. Part of a complex consisting of CLNK, SKAP1 and FYB1. Interacts (via SH2 domain) with FYB1; this interaction allows SKAP1 and FYB1 to promote tyrosine phosphorylation of CLNK by LYN. Interacts (via SH2 domain) with MAP4K1. In terms of processing, tyrosine-phosphorylated upon BCR cross-linking. Tyrosine phosphorylation at both Tyr-69 and Tyr-96 are required for BCR-induced calcium response and are essential to restore PLCG2-mediated signaling in BLNK-deficient DT40 cells, but this phosphorylation is dispensable in cells expressing LAT. Interacts with the SH2 domain of PLCG1 via phosphorylated Tyr-96. Tyrosine phosphorylation is increased when complexed with SKAP1 and FYB1.

It localises to the cytoplasm. An adapter protein which plays a role in the regulation of immunoreceptor signaling, including PLC-gamma-mediated B-cell antigen receptor (BCR) signaling and FC-epsilon R1-mediated mast cell degranulation. Together with FGR, it acts as a negative regulator of natural killer cell-activating receptors and inhibits interferon-gamma production. Acts as a positive regulator of both T-cell receptor and natural killer T (NKT) cell receptor signaling in CD4-positive NKT cells. Together with MAP4K1, it enhances CD3-triggered activation of T-cells and subsequent IL2 production. May be involved in tumor necrosis factor induced cell death by promoting reactive oxidative species generation, and MLKL oligomerization, ultimately leading to necrosis. Involved in phosphorylation of LAT. May be involved in high affinity immunoglobulin epsilon receptor signaling in mast cells. The sequence is that of Cytokine-dependent hematopoietic cell linker (CLNK) from Homo sapiens (Human).